Here is a 231-residue protein sequence, read N- to C-terminus: Uracil-DNA glycosylase (231 aa).

Residue aspartate 70 is the Proton acceptor of the active site.

The protein belongs to the uracil-DNA glycosylase (UDG) superfamily. UNG family.

It is found in the cytoplasm. The catalysed reaction is Hydrolyzes single-stranded DNA or mismatched double-stranded DNA and polynucleotides, releasing free uracil.. Excises uracil residues from the DNA which can arise as a result of misincorporation of dUMP residues by DNA polymerase or due to deamination of cytosine. The sequence is that of Uracil-DNA glycosylase from Pseudomonas fluorescens (strain Pf0-1).